The primary structure comprises 562 residues: Teichoic acid ribitol-phosphate polymerase TarL (562 aa).

The protein belongs to the CDP-glycerol glycerophosphotransferase family.

It is found in the cell membrane. It carries out the reaction 4-O-[di(2R)-glycerylphospho]-N-acetyl-beta-D-mannosaminyl-(1-&gt;4)-N-acetyl-alpha-D-glucosaminyl di-trans,octa-cis-undecaprenyl diphosphate + n CDP-L-ribitol = 4-O-[(D-ribitylphospho)(n)-di{(2R)-glycerylphospho}]-N-acetyl-beta-D-mannosaminyl-(1-&gt;4)-N-acetyl-alpha-D-glucosaminyl di-trans,octa-cis-undecaprenyl diphosphate + n CMP + n H(+). It functions in the pathway cell wall biogenesis; poly(ribitol phosphate) teichoic acid biosynthesis. Functionally, responsible for the polymerization of the main chain of the major teichoic acid by sequential transfer of ribitol phosphate units from CDP-ribitol to the second glycerol phosphate attached to the disaccharide linkage unit. Synthesizes polymers of more than 40 ribitol phosphate units in length. In Staphylococcus aureus (strain NCTC 8325 / PS 47), this protein is Teichoic acid ribitol-phosphate polymerase TarL (tarL).